Here is a 311-residue protein sequence, read N- to C-terminus: Aspartate carbamoyltransferase catalytic subunit (311 aa).

Arg58 and Thr59 together coordinate carbamoyl phosphate. Lys86 provides a ligand contact to L-aspartate. Carbamoyl phosphate-binding residues include Arg108, His136, and Gln139. L-aspartate is bound by residues Arg169 and Arg223. Residues Gly264 and Pro265 each contribute to the carbamoyl phosphate site.

Belongs to the aspartate/ornithine carbamoyltransferase superfamily. ATCase family. Heterododecamer (2C3:3R2) of six catalytic PyrB chains organized as two trimers (C3), and six regulatory PyrI chains organized as three dimers (R2).

The enzyme catalyses carbamoyl phosphate + L-aspartate = N-carbamoyl-L-aspartate + phosphate + H(+). The protein operates within pyrimidine metabolism; UMP biosynthesis via de novo pathway; (S)-dihydroorotate from bicarbonate: step 2/3. In terms of biological role, catalyzes the condensation of carbamoyl phosphate and aspartate to form carbamoyl aspartate and inorganic phosphate, the committed step in the de novo pyrimidine nucleotide biosynthesis pathway. The chain is Aspartate carbamoyltransferase catalytic subunit from Ruegeria pomeroyi (strain ATCC 700808 / DSM 15171 / DSS-3) (Silicibacter pomeroyi).